Here is a 67-residue protein sequence, read N- to C-terminus: Conotoxin TsMMSK-011 (67 aa).

A signal peptide spans 1 to 22; the sequence is MMSKLGVLLTICLLLFPLTVLP. Positions 23 to 50 are excised as a propeptide; that stretch reads MDGDQPADLPALRTQDIATDQSPWFDPV. Cystine bridges form between C53-C65, C54-C61, and C58-C64. The residue at position 63 (P63) is a 4-hydroxyproline.

Belongs to the conotoxin M superfamily. As to expression, expressed by the venom duct.

It localises to the secreted. This Conus tessulatus (Tessellate cone) protein is Conotoxin TsMMSK-011.